Here is a 404-residue protein sequence, read N- to C-terminus: Ubiquitin-like modifier-activating enzyme 5 (404 aa).

The ATP site is built by Gly-83, Asp-104, Lys-127, Asn-150, and Asn-184. Residues Cys-226 and Cys-229 each coordinate Zn(2+). The active-site Glycyl thioester intermediate is the Cys-250. The Zn(2+) site is built by Cys-303 and Cys-308. The tract at residues 372-404 (APEKSSETSEETVSAATADETSLEDLMAQMKSM) is disordered. Low complexity predominate over residues 382–391 (ETVSAATADE).

This sequence belongs to the ubiquitin-activating E1 family. UBA5 subfamily. As to quaternary structure, interacts (via C-terminus) with Ufc1. Interacts with Ufm1.

It is found in the cytoplasm. It localises to the nucleus. Its subcellular location is the golgi apparatus. E1-like enzyme which activates UFM1. The chain is Ubiquitin-like modifier-activating enzyme 5 from Drosophila melanogaster (Fruit fly).